The primary structure comprises 350 residues: Serine-threonine kinase receptor-associated protein (350 aa).

WD repeat units follow at residues 12–56, 57–96, 98–137, 141–179, 180–212, 221–262, and 263–302; these read GHTR…GTFL, GHKGAVWGATLNKDATKAATAAADFTAKVWDAVSGDELMT, AHKHIVKTVDFTQDSNYLLTGGQDKLLRIYDLNKPEAEPK, GHTSGIKKALWCSEDKQILSADDKTVRLWDHATMTEVKS, LNFNMSVSSMEYIPEGEILVITYGRSIAFHSAV, EAPA…ESYK, and GHFGPIHCVRFSPDGELYASGSEDGTLRLWQTVVGKTYGL. 3 positions are modified to phosphoserine: Ser312, Ser335, and Ser338.

Belongs to the WD repeat STRAP family. Part of the core SMN complex that contains SMN1, GEMIN2/SIP1, DDX20/GEMIN3, GEMIN4, GEMIN5, GEMIN6, GEMIN7, GEMIN8 and STRAP/UNRIP. Part of the SMN-Sm complex that contains SMN1, GEMIN2/SIP1, DDX20/GEMIN3, GEMIN4, GEMIN5, GEMIN6, GEMIN7, GEMIN8, STRAP/UNRIP and the Sm proteins SNRPB, SNRPD1, SNRPD2, SNRPD3, SNRPE, SNRPF and SNRPG. Associates with the SMN complex in the cytoplasm but not in the nucleus. Interacts with GEMIN6; the interaction is direct. Interacts with GEMIN7; the interaction is direct. Interacts with CSDE1/UNR and MAWBP. Interacts with PDPK1. Interacts with TRIM48.

It is found in the cytoplasm. The protein localises to the nucleus. In terms of biological role, the SMN complex catalyzes the assembly of small nuclear ribonucleoproteins (snRNPs), the building blocks of the spliceosome, and thereby plays an important role in the splicing of cellular pre-mRNAs. Most spliceosomal snRNPs contain a common set of Sm proteins SNRPB, SNRPD1, SNRPD2, SNRPD3, SNRPE, SNRPF and SNRPG that assemble in a heptameric protein ring on the Sm site of the small nuclear RNA to form the core snRNP (Sm core). In the cytosol, the Sm proteins SNRPD1, SNRPD2, SNRPE, SNRPF and SNRPG are trapped in an inactive 6S pICln-Sm complex by the chaperone CLNS1A that controls the assembly of the core snRNP. To assemble core snRNPs, the SMN complex accepts the trapped 5Sm proteins from CLNS1A forming an intermediate. Binding of snRNA inside 5Sm triggers eviction of the SMN complex, thereby allowing binding of SNRPD3 and SNRPB to complete assembly of the core snRNP. STRAP plays a role in the cellular distribution of the SMN complex. Negatively regulates TGF-beta signaling but positively regulates the PDPK1 kinase activity by enhancing its autophosphorylation and by significantly reducing the association of PDPK1 with 14-3-3 protein. In Homo sapiens (Human), this protein is Serine-threonine kinase receptor-associated protein (STRAP).